The chain runs to 161 residues: SsrA-binding protein (161 aa).

The protein belongs to the SmpB family.

It is found in the cytoplasm. In terms of biological role, required for rescue of stalled ribosomes mediated by trans-translation. Binds to transfer-messenger RNA (tmRNA), required for stable association of tmRNA with ribosomes. tmRNA and SmpB together mimic tRNA shape, replacing the anticodon stem-loop with SmpB. tmRNA is encoded by the ssrA gene; the 2 termini fold to resemble tRNA(Ala) and it encodes a 'tag peptide', a short internal open reading frame. During trans-translation Ala-aminoacylated tmRNA acts like a tRNA, entering the A-site of stalled ribosomes, displacing the stalled mRNA. The ribosome then switches to translate the ORF on the tmRNA; the nascent peptide is terminated with the 'tag peptide' encoded by the tmRNA and targeted for degradation. The ribosome is freed to recommence translation, which seems to be the essential function of trans-translation. The polypeptide is SsrA-binding protein (Desulforamulus reducens (strain ATCC BAA-1160 / DSM 100696 / MI-1) (Desulfotomaculum reducens)).